A 170-amino-acid polypeptide reads, in one-letter code: Acireductone dioxygenase (170 aa).

His-99, His-101, Glu-105, and His-144 together coordinate Fe(2+). Ni(2+) contacts are provided by His-99, His-101, Glu-105, and His-144.

The protein belongs to the acireductone dioxygenase (ARD) family. Monomer. It depends on Fe(2+) as a cofactor. Ni(2+) serves as cofactor.

The enzyme catalyses 1,2-dihydroxy-5-(methylsulfanyl)pent-1-en-3-one + O2 = 3-(methylsulfanyl)propanoate + CO + formate + 2 H(+). The catalysed reaction is 1,2-dihydroxy-5-(methylsulfanyl)pent-1-en-3-one + O2 = 4-methylsulfanyl-2-oxobutanoate + formate + 2 H(+). The protein operates within amino-acid biosynthesis; L-methionine biosynthesis via salvage pathway; L-methionine from S-methyl-5-thio-alpha-D-ribose 1-phosphate: step 5/6. Its function is as follows. Catalyzes 2 different reactions between oxygen and the acireductone 1,2-dihydroxy-3-keto-5-methylthiopentene (DHK-MTPene) depending upon the metal bound in the active site. Fe-containing acireductone dioxygenase (Fe-ARD) produces formate and 2-keto-4-methylthiobutyrate (KMTB), the alpha-ketoacid precursor of methionine in the methionine recycle pathway. Ni-containing acireductone dioxygenase (Ni-ARD) produces methylthiopropionate, carbon monoxide and formate, and does not lie on the methionine recycle pathway. In Bacillus cytotoxicus (strain DSM 22905 / CIP 110041 / 391-98 / NVH 391-98), this protein is Acireductone dioxygenase.